The chain runs to 181 residues: MDELTAQALRDFTTRYCDAWHEKHHSWPLSEELYGVPSPCIISTTSDAVYWQPQPFVGEQNLAAVERAFDIVLQPAIQTFYTTQFAGDMHAQFAEHTLTLLQTWSEDDFRRVQENLIGHLVTQKRLKLSPTLFIATLENELDVISLCNLSGEVCKETLGTRNRQVLAPSLAEFLKQLNPLL.

Belongs to the Syd family.

It is found in the cell inner membrane. In terms of biological role, interacts with the SecY protein in vivo. May bind preferentially to an uncomplexed state of SecY, thus functioning either as a chelating agent for excess SecY in the cell or as a regulatory factor that negatively controls the translocase function. The chain is Protein Syd from Escherichia fergusonii (strain ATCC 35469 / DSM 13698 / CCUG 18766 / IAM 14443 / JCM 21226 / LMG 7866 / NBRC 102419 / NCTC 12128 / CDC 0568-73).